A 205-amino-acid polypeptide reads, in one-letter code: Methylamine utilization protein MauD (205 aa).

A helical membrane pass occupies residues 5 to 25 (IMIASNVLLWGAFLALAALML). The region spanning 50–184 (PDIGERSPVF…VESLFETTRV (135 aa)) is the Thioredoxin domain.

The protein resides in the membrane. The protein operates within one-carbon metabolism; methylamine degradation. In terms of biological role, may be specifically involved in the processing, transport, and/or maturation of the MADH beta-subunit. The polypeptide is Methylamine utilization protein MauD (mauD) (Methylobacillus flagellatus (strain ATCC 51484 / DSM 6875 / VKM B-1610 / KT)).